A 369-amino-acid polypeptide reads, in one-letter code: tRNA/tmRNA (uracil-C(5))-methyltransferase (369 aa).

Residues Gln-190, Tyr-218, Asn-223, Glu-239, and Asp-301 each contribute to the S-adenosyl-L-methionine site. Cys-326 acts as the Nucleophile in catalysis. The Proton acceptor role is filled by Glu-360.

The protein belongs to the class I-like SAM-binding methyltransferase superfamily. RNA M5U methyltransferase family. TrmA subfamily.

The catalysed reaction is uridine(54) in tRNA + S-adenosyl-L-methionine = 5-methyluridine(54) in tRNA + S-adenosyl-L-homocysteine + H(+). It carries out the reaction uridine(341) in tmRNA + S-adenosyl-L-methionine = 5-methyluridine(341) in tmRNA + S-adenosyl-L-homocysteine + H(+). In terms of biological role, dual-specificity methyltransferase that catalyzes the formation of 5-methyluridine at position 54 (m5U54) in all tRNAs, and that of position 341 (m5U341) in tmRNA (transfer-mRNA). This is tRNA/tmRNA (uracil-C(5))-methyltransferase from Vibrio vulnificus (strain CMCP6).